Reading from the N-terminus, the 399-residue chain is Guanine nucleotide-binding protein G(f) subunit alpha (399 aa).

Residues 46 to 399 (TTVKILLLGT…SENVSSMGLF (354 aa)) form the G-alpha domain. Residues 49–62 (KILLLGTAESGKTT) are G1 motif. GTP is bound by residues 54 to 61 (GTAESGKT), 188 to 194 (LHSRKIT), 221 to 225 (DVGGQ), 290 to 293 (NKYD), and Ala-371. The interval 186–194 (DILHSRKIT) is G2 motif. A Mg(2+)-binding site is contributed by Thr-194. The G3 motif stretch occupies residues 217–226 (FQMYDVGGQR). The G4 motif stretch occupies residues 286–293 (IVFLNKYD). A G5 motif region spans residues 369–374 (TVATDT).

It belongs to the G-alpha family. As to quaternary structure, g proteins are composed of 3 units; alpha, beta and gamma. The alpha chain contains the guanine nucleotide binding site. As to expression, during embryogenesis, expressed primarily in the developing gut and transiently in the amnioserosa.

Functionally, guanine nucleotide-binding proteins (G proteins) are involved as modulators or transducers in various transmembrane signaling systems. The sequence is that of Guanine nucleotide-binding protein G(f) subunit alpha (Galphaf) from Drosophila melanogaster (Fruit fly).